We begin with the raw amino-acid sequence, 399 residues long: Acetylornithine aminotransferase (399 aa).

Pyridoxal 5'-phosphate contacts are provided by residues 102-103 (GA) and Phe138. Residue Arg141 participates in N(2)-acetyl-L-ornithine binding. 223 to 226 (DEVQ) is a pyridoxal 5'-phosphate binding site. Lys252 bears the N6-(pyridoxal phosphate)lysine mark. Thr280 is a binding site for pyridoxal 5'-phosphate.

This sequence belongs to the class-III pyridoxal-phosphate-dependent aminotransferase family. ArgD subfamily. Homodimer. It depends on pyridoxal 5'-phosphate as a cofactor.

It localises to the cytoplasm. The enzyme catalyses N(2)-acetyl-L-ornithine + 2-oxoglutarate = N-acetyl-L-glutamate 5-semialdehyde + L-glutamate. It functions in the pathway amino-acid biosynthesis; L-arginine biosynthesis; N(2)-acetyl-L-ornithine from L-glutamate: step 4/4. The sequence is that of Acetylornithine aminotransferase from Ralstonia nicotianae (strain ATCC BAA-1114 / GMI1000) (Ralstonia solanacearum).